Reading from the N-terminus, the 316-residue chain is Carbamate kinase-like protein YahI (316 aa).

This sequence belongs to the carbamate kinase family.

This is Carbamate kinase-like protein YahI (yahI) from Escherichia coli (strain K12).